Here is a 150-residue protein sequence, read N- to C-terminus: Ribonuclease K6 (150 aa).

Residues methionine 1–alanine 23 form the signal peptide. The active-site Proton acceptor is the histidine 38. 4 disulfide bridges follow: cysteine 46–cysteine 104, cysteine 60–cysteine 114, cysteine 78–cysteine 129, and cysteine 85–cysteine 92. Asparagine 55 is a glycosylation site (N-linked (GlcNAc...) asparagine). Substrate-binding positions include lysine 61–threonine 65 and lysine 86. Asparagine 100 carries an N-linked (GlcNAc...) asparagine glycan. Residue arginine 105 coordinates substrate. Histidine 145 serves as the catalytic Proton donor.

Belongs to the pancreatic ribonuclease family. Interacts (via N-terminus) with bacterial lipopolysaccharide (LPS).

Its subcellular location is the secreted. The protein resides in the lysosome. It is found in the cytoplasmic granule. Its function is as follows. Ribonuclease which shows a preference for the pyrimidines uridine and cytosine. Has potent antibacterial activity against a range of Gram-positive and Gram-negative bacteria, including P.aeruginosa, A.baumanii, M.luteus, S.aureus, E.faecalis, E.faecium, S.saprophyticus and E.coli. Causes loss of bacterial membrane integrity, and also promotes agglutination of Gram-negative bacteria. Probably contributes to urinary tract sterility. Bactericidal activity is independent of RNase activity. In Chlorocebus aethiops (Green monkey), this protein is Ribonuclease K6 (RNASE6).